Consider the following 250-residue polypeptide: uncharacterized protein (250 aa).

Positions 15, 17, 36, 56, 57, and 82 each coordinate NAD(+). Serine 143 contacts substrate. Residues tyrosine 156, lysine 160, phenylalanine 189, and threonine 191 each coordinate NAD(+). The active-site Proton acceptor is tyrosine 156.

Belongs to the short-chain dehydrogenases/reductases (SDR) family.

This is an uncharacterized protein from Mycobacterium tuberculosis (strain CDC 1551 / Oshkosh).